The chain runs to 89 residues: Small ribosomal subunit protein uS15 (89 aa).

Belongs to the universal ribosomal protein uS15 family. In terms of assembly, part of the 30S ribosomal subunit. Forms a bridge to the 50S subunit in the 70S ribosome, contacting the 23S rRNA.

In terms of biological role, one of the primary rRNA binding proteins, it binds directly to 16S rRNA where it helps nucleate assembly of the platform of the 30S subunit by binding and bridging several RNA helices of the 16S rRNA. Its function is as follows. Forms an intersubunit bridge (bridge B4) with the 23S rRNA of the 50S subunit in the ribosome. This is Small ribosomal subunit protein uS15 from Prochlorococcus marinus subsp. pastoris (strain CCMP1986 / NIES-2087 / MED4).